A 417-amino-acid polypeptide reads, in one-letter code: NADH-quinone oxidoreductase subunit D (417 aa).

Belongs to the complex I 49 kDa subunit family. As to quaternary structure, NDH-1 is composed of 14 different subunits. Subunits NuoB, C, D, E, F, and G constitute the peripheral sector of the complex.

The protein resides in the cell inner membrane. The catalysed reaction is a quinone + NADH + 5 H(+)(in) = a quinol + NAD(+) + 4 H(+)(out). Its function is as follows. NDH-1 shuttles electrons from NADH, via FMN and iron-sulfur (Fe-S) centers, to quinones in the respiratory chain. The immediate electron acceptor for the enzyme in this species is believed to be ubiquinone. Couples the redox reaction to proton translocation (for every two electrons transferred, four hydrogen ions are translocated across the cytoplasmic membrane), and thus conserves the redox energy in a proton gradient. This chain is NADH-quinone oxidoreductase subunit D, found in Hydrogenovibrio crunogenus (strain DSM 25203 / XCL-2) (Thiomicrospira crunogena).